The chain runs to 161 residues: MMSTMSIKEGLLVILLSLFLFDTTALIHRREIPHMESKGQMQRGQVLLGGWQERSPEDNEILELLPSVLTKVNQQSNDEYHLMPIKLLNVSSQVVAGVKYKMEVQVARSECKKSASEQVNLKTCKKLEGHPDQVMTLEVWEKPWEDFLQVNILETKVLSSV.

An N-terminal signal peptide occupies residues Met-1–Ala-25. The Important for interaction with host LGMN motif lies at Ser-76–Asp-78. A glycan (N-linked (GlcNAc...) asparagine) is linked at Asn-89. The Secondary area of contact motif lies at Gln-93–Gly-97. Cys-111 and Cys-124 are oxidised to a cystine.

The protein belongs to the cystatin family.

Cysteine protease inhibitor which inhibits members of the peptidase C1 family. Also acts as an asparaginyl endopeptidase inhibitor. In the human host, inhibits CTSL/cathepsin L, CTSS/cathepsin S, CTSB/cathepsin B and asparaginyl endopeptidase LGMN/AEP which may cause defects in both antigen and MHC class II invariant chain CD74/Ii processing. In Brugia malayi (Filarial nematode worm), this protein is Cystatin cpi-2.